We begin with the raw amino-acid sequence, 191 residues long: ATP-dependent Clp protease proteolytic subunit 1 (191 aa).

The active-site Nucleophile is the Ser-91. Residue His-116 is part of the active site.

The protein belongs to the peptidase S14 family. In terms of assembly, fourteen ClpP subunits assemble into 2 heptameric rings which stack back to back to give a disk-like structure with a central cavity, resembling the structure of eukaryotic proteasomes.

The protein resides in the cytoplasm. It carries out the reaction Hydrolysis of proteins to small peptides in the presence of ATP and magnesium. alpha-casein is the usual test substrate. In the absence of ATP, only oligopeptides shorter than five residues are hydrolyzed (such as succinyl-Leu-Tyr-|-NHMec, and Leu-Tyr-Leu-|-Tyr-Trp, in which cleavage of the -Tyr-|-Leu- and -Tyr-|-Trp bonds also occurs).. In terms of biological role, cleaves peptides in various proteins in a process that requires ATP hydrolysis. Has a chymotrypsin-like activity. Plays a major role in the degradation of misfolded proteins. The polypeptide is ATP-dependent Clp protease proteolytic subunit 1 (Chlamydia pneumoniae (Chlamydophila pneumoniae)).